The chain runs to 189 residues: Ribosome maturation factor RimM (189 aa).

Residues 96-169 (EDEFFQTDLI…TLLVEPYAAG (74 aa)) enclose the PRC barrel domain. The interval 170-189 (LIADDEDERPQNEKKKPKKS) is disordered.

The protein belongs to the RimM family. Binds ribosomal protein uS19.

The protein localises to the cytoplasm. In terms of biological role, an accessory protein needed during the final step in the assembly of 30S ribosomal subunit, possibly for assembly of the head region. Essential for efficient processing of 16S rRNA. May be needed both before and after RbfA during the maturation of 16S rRNA. It has affinity for free ribosomal 30S subunits but not for 70S ribosomes. This chain is Ribosome maturation factor RimM, found in Brucella anthropi (strain ATCC 49188 / DSM 6882 / CCUG 24695 / JCM 21032 / LMG 3331 / NBRC 15819 / NCTC 12168 / Alc 37) (Ochrobactrum anthropi).